An 845-amino-acid polypeptide reads, in one-letter code: Molybdenum cofactor sulfurase (845 aa).

Lysine 240 bears the N6-(pyridoxal phosphate)lysine mark. Residue cysteine 404 is part of the active site. Residues 666 to 840 form the MOSC domain; sequence SFPQDSSPSS…LMVGDTVTPS (175 aa).

This sequence belongs to the class-V pyridoxal-phosphate-dependent aminotransferase family. MOCOS subfamily. The cofactor is pyridoxal 5'-phosphate.

It carries out the reaction Mo-molybdopterin + L-cysteine + AH2 = thio-Mo-molybdopterin + L-alanine + A + H2O. Its pathway is cofactor biosynthesis; molybdopterin biosynthesis. In terms of biological role, sulfurates the molybdenum cofactor. Sulfation of molybdenum is essential for xanthine dehydrogenase (XDH) and aldehyde oxidase (ADO) enzymes in which molybdenum cofactor is liganded by 1 oxygen and 1 sulfur atom in active form. The polypeptide is Molybdenum cofactor sulfurase (Aspergillus clavatus (strain ATCC 1007 / CBS 513.65 / DSM 816 / NCTC 3887 / NRRL 1 / QM 1276 / 107)).